The following is a 430-amino-acid chain: Lipoyl synthase, mitochondrial (430 aa).

The N-terminal 37 residues, M1 to Y37, are a transit peptide targeting the mitochondrion. The span at T39–P55 shows a compositional bias: polar residues. The segment at T39–K58 is disordered. Positions 141, 146, 152, 172, 176, 179, and 387 each coordinate [4Fe-4S] cluster. The region spanning G155 to L376 is the Radical SAM core domain.

This sequence belongs to the radical SAM superfamily. Lipoyl synthase family. Requires [4Fe-4S] cluster as cofactor.

The protein resides in the mitochondrion. The catalysed reaction is [[Fe-S] cluster scaffold protein carrying a second [4Fe-4S](2+) cluster] + N(6)-octanoyl-L-lysyl-[protein] + 2 oxidized [2Fe-2S]-[ferredoxin] + 2 S-adenosyl-L-methionine + 4 H(+) = [[Fe-S] cluster scaffold protein] + N(6)-[(R)-dihydrolipoyl]-L-lysyl-[protein] + 4 Fe(3+) + 2 hydrogen sulfide + 2 5'-deoxyadenosine + 2 L-methionine + 2 reduced [2Fe-2S]-[ferredoxin]. Its pathway is protein modification; protein lipoylation via endogenous pathway; protein N(6)-(lipoyl)lysine from octanoyl-[acyl-carrier-protein]: step 2/2. In terms of biological role, catalyzes the radical-mediated insertion of two sulfur atoms into the C-6 and C-8 positions of the octanoyl moiety bound to the lipoyl domains of lipoate-dependent enzymes, thereby converting the octanoylated domains into lipoylated derivatives. The chain is Lipoyl synthase, mitochondrial from Ajellomyces capsulatus (strain G186AR / H82 / ATCC MYA-2454 / RMSCC 2432) (Darling's disease fungus).